Here is a 406-residue protein sequence, read N- to C-terminus: Tryptophan synthase beta chain (406 aa).

K99 carries the N6-(pyridoxal phosphate)lysine modification.

This sequence belongs to the TrpB family. In terms of assembly, tetramer of two alpha and two beta chains. The cofactor is pyridoxal 5'-phosphate.

The catalysed reaction is (1S,2R)-1-C-(indol-3-yl)glycerol 3-phosphate + L-serine = D-glyceraldehyde 3-phosphate + L-tryptophan + H2O. Its pathway is amino-acid biosynthesis; L-tryptophan biosynthesis; L-tryptophan from chorismate: step 5/5. Functionally, the beta subunit is responsible for the synthesis of L-tryptophan from indole and L-serine. This Brucella anthropi (strain ATCC 49188 / DSM 6882 / CCUG 24695 / JCM 21032 / LMG 3331 / NBRC 15819 / NCTC 12168 / Alc 37) (Ochrobactrum anthropi) protein is Tryptophan synthase beta chain.